The following is a 666-amino-acid chain: Protein scarlet (666 aa).

Topologically, residues 1–417 (MSDSDSKRID…TIQWLRFIQK (417 aa)) are cytoplasmic. Positions 26–55 (PVGSTIEVPSLDSTPKLSKRNSSERSLPLR) are disordered. The 248-residue stretch at 69–316 (LVWRDLCVYT…FANHGYYCPE (248 aa)) folds into the ABC transporter domain. 108–115 (GSSGSGKT) contacts ATP. A helical transmembrane segment spans residues 418–438 (IAMAFIIGACFAGTTEPSQLG). The Extracellular segment spans residues 439–444 (VQAVQG). A helical membrane pass occupies residues 445–465 (ALFIMISENTYHPMYSVLNLF). Residues 466–490 (PQGFPLFMRETRSGLYSTGQYYAAN) are Cytoplasmic-facing. Residues 491–511 (ILALLPGMIIEPLIFVIICYW) traverse the membrane as a helical segment. Topologically, residues 512–518 (LTGLRST) are extracellular. A helical membrane pass occupies residues 519 to 539 (FYAFGVTAMCVVLVMNVATAC). At 540–551 (GCFFSTAFNSVP) the chain is on the cytoplasmic side. Residues 552–572 (LAMAYLVPLDYIFMITSGIFI) form a helical membrane-spanning segment. Residues 573–639 (QVNSLPVAFW…YSFNESNVYR (67 aa)) are Extracellular-facing. N-linked (GlcNAc...) asparagine glycans are attached at residues Asn-607 and Asn-633. Residues 640-660 (NLLAMVGLYFGFHLLGYYCLW) form a helical membrane-spanning segment. The Cytoplasmic segment spans residues 661 to 666 (RRARKL).

Belongs to the ABC transporter superfamily. ABCG family. Eye pigment precursor importer (TC 3.A.1.204) subfamily. As to quaternary structure, may form a heterodimer with w/white. In terms of tissue distribution, expressed in the eye, specifically in primary pigment cells, secondary pigment cells and retinula cells (at protein level).

It localises to the cytoplasmic vesicle membrane. It catalyses the reaction L-kynurenine(out) + ATP + H2O = L-kynurenine(in) + ADP + phosphate + H(+). In terms of biological role, ATP-dependent transporter of the ATP-binding cassette (ABC) family which transports various molecules including bioamines, neurotransmitters and metabolic intermediates. In the eye and probably in association with w/white, required for the transport of the eye brown pigment precursors, kynurenine and probably tryptophan, into pigment cell granules. In Malpighian tubules and pupal eyes, involved in kynurenine transport. Probably in association with w/white, plays a role in zinc storage granule biogenesis in Malpighian tubule principal epithelial cells. This Drosophila melanogaster (Fruit fly) protein is Protein scarlet.